The chain runs to 964 residues: Collagen alpha-1(I) chain (964 aa).

Residues 1–964 form a disordered region; that stretch reads GGISVPGPMG…PGPPGPPGPP (964 aa). P18, P21, P24, P33, P36, P39, P53, P68, P74, P83, and P89 each carry 4-hydroxyproline. Over residues 56 to 70 the composition is skewed to basic and acidic residues; the sequence is NGDDGEAGKPGRPGE. Residue K92 is modified to 5-hydroxylysine; alternate. O-linked (Gal...) hydroxylysine; alternate glycosylation is present at K92. S98 carries the phosphoserine modification. Composition is skewed to low complexity over residues 106 to 117 and 126 to 144; these read DAGPAGPKQMGP and PGAS…TGAA. 4-hydroxyproline is present on residues P126, P147, P156, P159, P186, P189, P201, P207, P216, P222, P225, and P240. The segment covering 146–158 has biased composition (pro residues); the sequence is PPGPTGPAGPPGF. Over residues 192-231 the composition is skewed to low complexity; sequence AGAAGPAGNPGADGQPGAKGANGAPGIAGAPGFPGARGPS. At K243 the chain carries 5-hydroxylysine. P249, P252, P260, P269, P284, P290, P299, and P305 each carry 4-hydroxyproline. Residues 294–303 show a composition bias toward gly residues; that stretch reads GERGGPGSRG. K314 is modified (5-hydroxylysine). 24 positions are modified to 4-hydroxyproline: P323, P332, P338, P344, P353, P356, P365, P374, P379, P391, P400, P409, P412, P430, P447, P453, P459, P465, P471, P477, P489, P498, P510, and P519. The segment covering 347 to 373 has biased composition (low complexity); sequence KGLTGSPGSPGPDGKTGPPGPAGQDGR. Low complexity predominate over residues 381–400; it reads ARGQAGVMGFPGPKGAAGEP. Positions 459 to 468 are enriched in low complexity; that stretch reads PGEAGKPGEQ. K531 bears the 5-hydroxylysine mark. 4-hydroxyproline occurs at positions 537, 552, and 558. The segment covering 564-578 has biased composition (low complexity); it reads SGPSGPAGPTGARGA. S567 carries the post-translational modification Phosphoserine. 8 positions are modified to 4-hydroxyproline: P579, P585, P588, P597, P603, P621, P630, and P639. Residues 591–618 are compositionally biased toward low complexity; the sequence is AGFAGPPGADGQPGAKGEPGDAGAKGDA. The segment covering 620-632 has biased composition (pro residues); that stretch reads PPGPAGPTGPPGP. Residue K642 is modified to 5-hydroxylysine. Residues 647-663 show a composition bias toward low complexity; it reads SAGPPGATGFPGAAGRV. Residues P651 and P657 each carry the 4-hydroxyproline modification. The residue at position 665 (P665) is a 3-hydroxyproline. 15 positions are modified to 4-hydroxyproline: P666, P675, P678, P704, P712, P721, P739, P748, P751, P757, P772, P778, P784, P792, and P798. Residues 709-721 are compositionally biased toward low complexity; the sequence is KGSPGADGPAGAP. Residues 771–781 show a composition bias toward pro residues; that stretch reads PPGPMGPPGLA. At K807 the chain carries 5-hydroxylysine. Positions 815 to 830 are enriched in pro residues; the sequence is PGPPGAPGAPGAPGPV. A 4-hydroxyproline mark is found at P818, P821, and P824. The segment covering 850 to 864 has biased composition (low complexity); that stretch reads AGPAGARGPAGPQGP. The segment covering 865–879 has biased composition (basic and acidic residues); sequence RGDKGETGEQGDRGI. 5-hydroxylysine is present on K868. Position 880 is a 5-hydroxylysine; alternate (K880). O-linked (Gal...) hydroxylysine; alternate glycosylation is present at K880. Residues P895, P898, P916, and P931 each carry the 4-hydroxyproline modification. The span at 898 to 931 shows a compositional bias: low complexity; that stretch reads PGEQGPSGASGPAGPRGPPGSAGSPGKDGLNGLP. The residue at position 936 (P936) is a 3-hydroxyproline. P937 is modified (4-hydroxyproline). The segment covering 949–964 has biased composition (pro residues); the sequence is VGPPGPPGPPGPPGPP. 3-hydroxyproline is present on P951. Residue P952 is modified to 4-hydroxyproline. Residue P954 is modified to 3-hydroxyproline. Position 955 is a 4-hydroxyproline (P955). A 3-hydroxyproline modification is found at P957. P958, P961, and P964 each carry 4-hydroxyproline.

Belongs to the fibrillar collagen family. In terms of assembly, trimers of one alpha 2(I) and two alpha 1(I) chains. Contains mostly 4-hydroxyproline. Proline residues at the third position of the tripeptide repeating unit (G-X-Y) are hydroxylated in some or all of the chains. Post-translationally, contains 3-hydroxyproline at a few sites. This modification occurs on the first proline residue in the sequence motif Gly-Pro-Hyp, where Hyp is 4-hydroxyproline. In terms of processing, lysine residues at the third position of the tripeptide repeating unit (G-X-Y) are 5-hydroxylated in some or all of the chains. O-glycosylated on hydroxylated lysine residues. The O-linked glycan consists of a Glc-Gal disaccharide. Expressed in bones.

It is found in the secreted. It localises to the extracellular space. The protein resides in the extracellular matrix. Type I collagen is a member of group I collagen (fibrillar forming collagen). The protein is Collagen alpha-1(I) chain of Parocnus serus (Greater Haitian ground sloth).